Reading from the N-terminus, the 396-residue chain is Transcription factor E2FC (396 aa).

Positions 34-48 (PRYSSLTPSSTNRPF) are enriched in polar residues. The interval 34-57 (PRYSSLTPSSTNRPFSVSQSLPNS) is disordered. The DNA-binding element occupies 155-220 (RYDSSLGLLT…TTKNHIRWKG (66 aa)). Residues 226-268 (QKDLGDQISRLKSEVESMQSEESRLDDLIRERQEALRSLEEDD) are a coiled coil. A leucine-zipper region spans residues 236-264 (LKSEVESMQSEESRLDDLIRERQEALRSL). Residues 376–391 (DYWFESDAEVSLTDLW) are retinoblastoma protein binding.

It belongs to the E2F/DP family. Heterodimer with DP proteins. Interacts preferentially with DPB, but also with DPA. No interaction with DPB when phosphorylated. Interacts with SKP2A, CDKA-1 and maize retinoblastoma-related protein RBR1. Component of a DREAM-like complex which modulates a variety of developmentally regulated genes and of the mitotic genes in proliferating and differentiated cells. Interacts with MYB3R3 at later stages of leaves development. In terms of processing, phosphorylated by cyclin-dependent kinase. Phosphorylation is necessary to target E2FC for proteolysis. Expressed in meristematic areas, vascular tissues, apical part of the roots, cotyledons, upper region of the hypocotyls, trichomes, young flower buds and pollen grains.

The protein resides in the cytoplasm. In terms of biological role, involved in transcriptional repression. May act by repressing E2F-regulated genes in mature differentiated cells, but is not an antagonist of E2FA. Restricts cell division and is involved in the coordination between cell proliferation and endoreduplication during development. May play a role during the transition from skotomorphogenesis to photomorphogenesis. Regulated by phosphorylation-dependent proteolysis via the protein-ubiquitin ligase SCF(SKP2A) complex. This chain is Transcription factor E2FC (E2FC), found in Arabidopsis thaliana (Mouse-ear cress).